A 480-amino-acid polypeptide reads, in one-letter code: tRNA-2-methylthio-N(6)-dimethylallyladenosine synthase (480 aa).

The MTTase N-terminal domain occupies 31 to 151 (RGLHVITWGC…LPEMVARAAR (121 aa)). Residues C40, C76, C114, C192, C196, and C199 each coordinate [4Fe-4S] cluster. A Radical SAM core domain is found at 178 to 410 (SPGGITSFLT…QALLRTQQDA (233 aa)). Positions 413–475 (DGTVGHVVPV…TNSLSGTLVQ (63 aa)) constitute a TRAM domain.

It belongs to the methylthiotransferase family. MiaB subfamily. As to quaternary structure, monomer. It depends on [4Fe-4S] cluster as a cofactor.

The protein resides in the cytoplasm. It carries out the reaction N(6)-dimethylallyladenosine(37) in tRNA + (sulfur carrier)-SH + AH2 + 2 S-adenosyl-L-methionine = 2-methylsulfanyl-N(6)-dimethylallyladenosine(37) in tRNA + (sulfur carrier)-H + 5'-deoxyadenosine + L-methionine + A + S-adenosyl-L-homocysteine + 2 H(+). Its function is as follows. Catalyzes the methylthiolation of N6-(dimethylallyl)adenosine (i(6)A), leading to the formation of 2-methylthio-N6-(dimethylallyl)adenosine (ms(2)i(6)A) at position 37 in tRNAs that read codons beginning with uridine. The chain is tRNA-2-methylthio-N(6)-dimethylallyladenosine synthase from Gluconacetobacter diazotrophicus (strain ATCC 49037 / DSM 5601 / CCUG 37298 / CIP 103539 / LMG 7603 / PAl5).